A 179-amino-acid chain; its full sequence is MTTFYDYYKSKIVKKLMMELNYSSIMQVPKIDKITLNMGVGAASSDKKVLDNAVLDLTAISGQKPLITKARKSVAGFKIRQGYPIGCKVTLRGKRKWDFFERLIVIAIPRIRDFRGLSTNSFDGKGNYSLGIREQIIFPEIDYDKIDRVRGLDITITTTANSDHEARLLLSSFNFPFRK.

Belongs to the universal ribosomal protein uL5 family. In terms of assembly, part of the 50S ribosomal subunit; part of the 5S rRNA/L5/L18/L25 subcomplex. Contacts the 5S rRNA and the P site tRNA. Forms a bridge to the 30S subunit in the 70S ribosome.

In terms of biological role, this is one of the proteins that bind and probably mediate the attachment of the 5S RNA into the large ribosomal subunit, where it forms part of the central protuberance. In the 70S ribosome it contacts protein S13 of the 30S subunit (bridge B1b), connecting the 2 subunits; this bridge is implicated in subunit movement. Contacts the P site tRNA; the 5S rRNA and some of its associated proteins might help stabilize positioning of ribosome-bound tRNAs. In Buchnera aphidicola subsp. Schizaphis graminum (strain Sg), this protein is Large ribosomal subunit protein uL5.